A 479-amino-acid polypeptide reads, in one-letter code: Proline--tRNA ligase (479 aa).

Belongs to the class-II aminoacyl-tRNA synthetase family. ProS type 3 subfamily. As to quaternary structure, homodimer.

The protein resides in the cytoplasm. It catalyses the reaction tRNA(Pro) + L-proline + ATP = L-prolyl-tRNA(Pro) + AMP + diphosphate. Functionally, catalyzes the attachment of proline to tRNA(Pro) in a two-step reaction: proline is first activated by ATP to form Pro-AMP and then transferred to the acceptor end of tRNA(Pro). The protein is Proline--tRNA ligase of Lachnospira eligens (strain ATCC 27750 / DSM 3376 / VPI C15-48 / C15-B4) (Eubacterium eligens).